The primary structure comprises 297 residues: Acetyl-coenzyme A carboxylase carboxyl transferase subunit beta (297 aa).

Positions 27–296 (LWHKCPSCEA…PVETSQVTAK (270 aa)) constitute a CoA carboxyltransferase N-terminal domain. 4 residues coordinate Zn(2+): Cys-31, Cys-34, Cys-50, and Cys-53. Residues 31 to 53 (CPSCEAVLYRPELEKTLDVCPKC) form a C4-type zinc finger.

Belongs to the AccD/PCCB family. In terms of assembly, acetyl-CoA carboxylase is a heterohexamer composed of biotin carboxyl carrier protein (AccB), biotin carboxylase (AccC) and two subunits each of ACCase subunit alpha (AccA) and ACCase subunit beta (AccD). The cofactor is Zn(2+).

It localises to the cytoplasm. It carries out the reaction N(6)-carboxybiotinyl-L-lysyl-[protein] + acetyl-CoA = N(6)-biotinyl-L-lysyl-[protein] + malonyl-CoA. Its pathway is lipid metabolism; malonyl-CoA biosynthesis; malonyl-CoA from acetyl-CoA: step 1/1. Component of the acetyl coenzyme A carboxylase (ACC) complex. Biotin carboxylase (BC) catalyzes the carboxylation of biotin on its carrier protein (BCCP) and then the CO(2) group is transferred by the transcarboxylase to acetyl-CoA to form malonyl-CoA. This is Acetyl-coenzyme A carboxylase carboxyl transferase subunit beta from Stutzerimonas stutzeri (strain A1501) (Pseudomonas stutzeri).